Reading from the N-terminus, the 355-residue chain is Probable dual-specificity RNA methyltransferase RlmN 1 (355 aa).

Residue Glu91 is the Proton acceptor of the active site. In terms of domain architecture, Radical SAM core spans 99–336 (RADRAAGCLS…THLRRSRGPD (238 aa)). Cys106 and Cys341 are disulfide-bonded. The [4Fe-4S] cluster site is built by Cys113, Cys117, and Cys120. S-adenosyl-L-methionine is bound by residues 163–164 (GE), Ser195, 218–220 (SLH), and Asn294. Cys341 functions as the S-methylcysteine intermediate in the catalytic mechanism.

The protein belongs to the radical SAM superfamily. RlmN family. It depends on [4Fe-4S] cluster as a cofactor.

It localises to the cytoplasm. It catalyses the reaction adenosine(2503) in 23S rRNA + 2 reduced [2Fe-2S]-[ferredoxin] + 2 S-adenosyl-L-methionine = 2-methyladenosine(2503) in 23S rRNA + 5'-deoxyadenosine + L-methionine + 2 oxidized [2Fe-2S]-[ferredoxin] + S-adenosyl-L-homocysteine. The enzyme catalyses adenosine(37) in tRNA + 2 reduced [2Fe-2S]-[ferredoxin] + 2 S-adenosyl-L-methionine = 2-methyladenosine(37) in tRNA + 5'-deoxyadenosine + L-methionine + 2 oxidized [2Fe-2S]-[ferredoxin] + S-adenosyl-L-homocysteine. Its function is as follows. Specifically methylates position 2 of adenine 2503 in 23S rRNA and position 2 of adenine 37 in tRNAs. The chain is Probable dual-specificity RNA methyltransferase RlmN 1 from Opitutus terrae (strain DSM 11246 / JCM 15787 / PB90-1).